We begin with the raw amino-acid sequence, 492 residues long: Cell death protein 6 (492 aa).

A compositionally biased stretch (low complexity) spans 19–29 (GNNINGEGSSS). Residues 19 to 38 (GNNINGEGSSSPSTSAPQVK) are disordered. The region spanning 55–215 (INGHVEYVAR…YILKKKIVEL (161 aa)) is the PID domain. Disordered regions lie at residues 241–385 (TGPP…STAA) and 464–492 (TGDLGGIEGESDYGTPSDRLNPKMMNLKQ). Residues 244 to 268 (PIYPGLGPPALPLSPMPQGPPPNIP) show a composition bias toward pro residues. Residues 300–312 (ASPSVSPASTSPS) show a composition bias toward low complexity. The segment covering 313–333 (GPAPSIPPPRPPALAPPPPVA) has biased composition (pro residues). The span at 373–383 (FDPRAGEKKST) shows a compositional bias: basic and acidic residues.

Belongs to the ced-6 family. In terms of assembly, homodimer. Interacts with ced-1. Interacts with E3 ubiquitin-protein ligase trim-21. Detected in gonadal sheath cells.

It is found in the cytoplasm. In terms of biological role, may function as an adapter protein in a pathway that mediates recognition and phagocytosis of apoptotic cells during normal development. Promotes engulfment of cells at both early and late stages of apoptosis. Required for actin reorganization around apoptotic cells. Plays a role in protecting dopaminergic neurons from oxidative stress-induced degeneration. Mediates recruitment of E3 ubiquitin-protein ligase trim-21 to the apoptotic cell surface which promotes ubiquitination and degradation of ced-1. This is Cell death protein 6 from Caenorhabditis elegans.